Reading from the N-terminus, the 171-residue chain is Small ribosomal subunit protein uS5 (171 aa).

The S5 DRBM domain occupies 15 to 78 (LKDRLVAINR…EAAKKNLTRV (64 aa)).

This sequence belongs to the universal ribosomal protein uS5 family. In terms of assembly, part of the 30S ribosomal subunit. Contacts proteins S4 and S8.

Functionally, with S4 and S12 plays an important role in translational accuracy. Its function is as follows. Located at the back of the 30S subunit body where it stabilizes the conformation of the head with respect to the body. This chain is Small ribosomal subunit protein uS5, found in Phocaeicola vulgatus (strain ATCC 8482 / DSM 1447 / JCM 5826 / CCUG 4940 / NBRC 14291 / NCTC 11154) (Bacteroides vulgatus).